A 440-amino-acid polypeptide reads, in one-letter code: Discs overgrown protein kinase (440 aa).

Residues Tyr9–Phe277 enclose the Protein kinase domain. Residues Ile15–Ile23 and Lys38 contribute to the ATP site. Asp128 functions as the Proton acceptor in the catalytic mechanism. The nuclear localization signal; essential for interaction with Bdbt and important for nuclear localization stretch occupies residues Lys221–Lys224. Residues Ser333 and Ser334 each carry the phosphoserine modification. A disordered region spans residues Ser376–Lys440. Residues Gln413–Lys440 are compositionally biased toward gly residues.

It belongs to the protein kinase superfamily. CK1 Ser/Thr protein kinase family. Casein kinase I subfamily. As to quaternary structure, forms a complex with per. Interacts with Dlish. Interacts (via nuclear localization signal) with Bdbt. Detected in the head (at protein level). Expressed in photoreceptor cells of the eyes as well as in the region situated between the optic lobe and the central brain.

The protein resides in the nucleus. It is found in the cytoplasm. It localises to the cytosol. It carries out the reaction L-seryl-[protein] + ATP = O-phospho-L-seryl-[protein] + ADP + H(+). The enzyme catalyses L-threonyl-[protein] + ATP = O-phospho-L-threonyl-[protein] + ADP + H(+). Its function is as follows. Serine/threonine-protein kinase which is involved in the circadian rhythm pathway, viability and planar cell polarity. In the circadian rhythm pathway, phosphorylates the clock gene period (per) and targets it for degradation in the absence of timeless (tim), thus contributing to production of the circadian oscillations of the clock genes. Together with CkIalpha, regulates processing of ci by phosphorylating it, which promotes its binding to slmb, the F-box recognition component of the SCF(slmb) E3 ubiquitin-protein ligase. Involved in the inhibition of apoptosis during cell proliferation and growth arrest in imaginal disks. Also functions in planar cell polarity. The sequence is that of Discs overgrown protein kinase (dco) from Drosophila melanogaster (Fruit fly).